We begin with the raw amino-acid sequence, 1063 residues long: Integrin alpha-8 (1063 aa).

Residues 1 to 38 (MSPGASRGPRGSQAPLIAPLCCAAAALGMLLWSPACQA) form the signal peptide. Over 39–1012 (FNLDVEKLTV…TPNVSFSIPL (974 aa)) the chain is Extracellular. FG-GAP repeat units lie at residues 44–105 (EKLT…GSAQ), 122–183 (NGTK…AYAE), 188–240 (RNSN…IANY), 253–306 (KQTE…STDM), 307–372 (TFIQ…LLFR), 373–431 (DPQI…GLNT), and 435–498 (QVLQ…LHPM). N-linked (GlcNAc...) asparagine glycosylation occurs at asparagine 81. An intrachain disulfide couples cysteine 96 to cysteine 106. Asparagine 122 carries an N-linked (GlcNAc...) asparagine glycan. The cysteines at positions 150 and 171 are disulfide-linked. N-linked (GlcNAc...) asparagine glycosylation occurs at asparagine 177. The cysteines at positions 187 and 200 are disulfide-linked. N-linked (GlcNAc...) asparagine glycosylation occurs at asparagine 239. Residues glutamate 275, threonine 277, aspartate 279, and glutamate 283 each coordinate Ca(2+). Asparagine 302 and asparagine 311 each carry an N-linked (GlcNAc...) asparagine glycan. The Ca(2+) site is built by aspartate 329, asparagine 331, aspartate 333, leucine 335, aspartate 337, aspartate 395, asparagine 397, aspartate 399, tyrosine 401, and aspartate 403. The Cell attachment site signature appears at 455-457 (RGD). 5 residues coordinate Ca(2+): aspartate 459, aspartate 461, asparagine 463, tyrosine 465, and aspartate 467. The N-linked (GlcNAc...) asparagine glycan is linked to asparagine 504. 2 disulfides stabilise this stretch: cysteine 507/cysteine 518 and cysteine 524/cysteine 580. N-linked (GlcNAc...) asparagine glycans are attached at residues asparagine 601 and asparagine 605. Disulfide bonds link cysteine 641-cysteine 647 and cysteine 713-cysteine 726. N-linked (GlcNAc...) asparagine glycosylation is found at asparagine 719, asparagine 737, asparagine 753, asparagine 780, asparagine 896, and asparagine 923. Intrachain disulfides connect cysteine 867-cysteine 924 and cysteine 929-cysteine 934. Asparagine 1005 is a glycosylation site (N-linked (GlcNAc...) asparagine). The chain crosses the membrane as a helical span at residues 1013–1033 (WVIILAILLGLLVLAILTLAL). At 1034–1063 (WKCGFFDRARPPQEDMTDREQLTNDKTPEA) the chain is on the cytoplasmic side.

The protein belongs to the integrin alpha chain family. Heterodimer of an alpha and a beta subunit. The alpha subunit is composed of a heavy and a light chain linked by a disulfide bond. Alpha-8 associates with beta-1. In terms of tissue distribution, expressed in mesenchymal cells, including alveolar myofibroblasts, kidney mesangial cells and hepatic stellar cells and vascular and visceral smooth muscle (at protein level).

Its subcellular location is the membrane. It is found in the cell membrane. Its function is as follows. Integrin alpha-8/beta-1 functions in the genesis of kidney and probably of other organs by regulating the recruitment of mesenchymal cells into epithelial structures. It recognizes the sequence R-G-D in a wide array of ligands including TNC, FN1, SPP1 TGFB1, TGFB3 and VTN. NPNT is probably its functional ligand in kidney genesis. Neuronal receptor for TNC it mediates cell-cell interactions and regulates neurite outgrowth of sensory and motor neurons. The protein is Integrin alpha-8 (ITGA8) of Homo sapiens (Human).